Consider the following 291-residue polypeptide: 4-hydroxy-tetrahydrodipicolinate synthase (291 aa).

Residue T42 coordinates pyruvate. Residue Y129 is the Proton donor/acceptor of the active site. K157 (schiff-base intermediate with substrate) is an active-site residue. I198 serves as a coordination point for pyruvate.

It belongs to the DapA family. As to quaternary structure, homotetramer; dimer of dimers.

It is found in the cytoplasm. The catalysed reaction is L-aspartate 4-semialdehyde + pyruvate = (2S,4S)-4-hydroxy-2,3,4,5-tetrahydrodipicolinate + H2O + H(+). The protein operates within amino-acid biosynthesis; L-lysine biosynthesis via DAP pathway; (S)-tetrahydrodipicolinate from L-aspartate: step 3/4. Functionally, catalyzes the condensation of (S)-aspartate-beta-semialdehyde [(S)-ASA] and pyruvate to 4-hydroxy-tetrahydrodipicolinate (HTPA). The polypeptide is 4-hydroxy-tetrahydrodipicolinate synthase (Chlamydia pneumoniae (Chlamydophila pneumoniae)).